We begin with the raw amino-acid sequence, 319 residues long: Lipoyl synthase (319 aa).

[4Fe-4S] cluster-binding residues include Cys66, Cys71, Cys77, Cys92, Cys96, Cys99, and Ser305. The 217-residue stretch at 78-294 (FNRGTATFMI…KKEALSIGFT (217 aa)) folds into the Radical SAM core domain.

This sequence belongs to the radical SAM superfamily. Lipoyl synthase family. [4Fe-4S] cluster is required as a cofactor.

It is found in the cytoplasm. It carries out the reaction [[Fe-S] cluster scaffold protein carrying a second [4Fe-4S](2+) cluster] + N(6)-octanoyl-L-lysyl-[protein] + 2 oxidized [2Fe-2S]-[ferredoxin] + 2 S-adenosyl-L-methionine + 4 H(+) = [[Fe-S] cluster scaffold protein] + N(6)-[(R)-dihydrolipoyl]-L-lysyl-[protein] + 4 Fe(3+) + 2 hydrogen sulfide + 2 5'-deoxyadenosine + 2 L-methionine + 2 reduced [2Fe-2S]-[ferredoxin]. It participates in protein modification; protein lipoylation via endogenous pathway; protein N(6)-(lipoyl)lysine from octanoyl-[acyl-carrier-protein]: step 2/2. Functionally, catalyzes the radical-mediated insertion of two sulfur atoms into the C-6 and C-8 positions of the octanoyl moiety bound to the lipoyl domains of lipoate-dependent enzymes, thereby converting the octanoylated domains into lipoylated derivatives. The protein is Lipoyl synthase of Buchnera aphidicola subsp. Schizaphis graminum (strain Sg).